Consider the following 348-residue polypeptide: ELAV-like protein 3 (348 aa).

3 consecutive RRM domains span residues 34–112, 120–200, and 265–343; these read TNLI…YARP, ANLY…FANN, and WCIF…FKTS.

The protein belongs to the RRM elav family. Expression is neural-specific in both embryos and adults. Expressed from neurula stage onwards in primary motor-, inter- and sensory-neurons. Expressed in the closing neural tube and motor neurons of stage 18 embryos, and primarily in the ventricular zone and dorsal region of the tailbud and adult brain. Expressed from stage 26 onwards in the differentiating ganglion cell layer of the retina, extending to the inner nuclear layer at later stages.

In terms of biological role, RNA-binding protein that binds to AU-rich element (ARE) sequences of target mRNAs. May also bind poly-A tracts via RRM 3. May be involved in neuronal differentiation and maintenance. This is ELAV-like protein 3 (elavl3) from Xenopus laevis (African clawed frog).